The chain runs to 227 residues: Nucleoside triphosphate pyrophosphatase (227 aa).

D77 (proton acceptor) is an active-site residue.

The protein belongs to the Maf family. A divalent metal cation is required as a cofactor.

Its subcellular location is the cytoplasm. The catalysed reaction is a ribonucleoside 5'-triphosphate + H2O = a ribonucleoside 5'-phosphate + diphosphate + H(+). The enzyme catalyses a 2'-deoxyribonucleoside 5'-triphosphate + H2O = a 2'-deoxyribonucleoside 5'-phosphate + diphosphate + H(+). Nucleoside triphosphate pyrophosphatase. May have a dual role in cell division arrest and in preventing the incorporation of modified nucleotides into cellular nucleic acids. This chain is Nucleoside triphosphate pyrophosphatase, found in Rickettsia typhi (strain ATCC VR-144 / Wilmington).